The sequence spans 378 residues: Ribosomal RNA large subunit methyltransferase G (378 aa).

It belongs to the methyltransferase superfamily. RlmG family.

The protein localises to the cytoplasm. The enzyme catalyses guanosine(1835) in 23S rRNA + S-adenosyl-L-methionine = N(2)-methylguanosine(1835) in 23S rRNA + S-adenosyl-L-homocysteine + H(+). Functionally, specifically methylates the guanine in position 1835 (m2G1835) of 23S rRNA. This Shewanella baltica (strain OS185) protein is Ribosomal RNA large subunit methyltransferase G.